Consider the following 273-residue polypeptide: Dermonecrotic toxin LarSicTox-alphaIB1aiv (273 aa).

H5 is an active-site residue. 2 residues coordinate Mg(2+): E25 and D27. H41 functions as the Nucleophile in the catalytic mechanism. Intrachain disulfides connect C45/C51 and C47/C190. D85 contributes to the Mg(2+) binding site. Residue N250 is glycosylated (N-linked (GlcNAc...) asparagine).

The protein belongs to the arthropod phospholipase D family. Class II subfamily. It depends on Mg(2+) as a cofactor. Expressed by the venom gland.

The protein resides in the secreted. It carries out the reaction an N-(acyl)-sphingosylphosphocholine = an N-(acyl)-sphingosyl-1,3-cyclic phosphate + choline. The catalysed reaction is an N-(acyl)-sphingosylphosphoethanolamine = an N-(acyl)-sphingosyl-1,3-cyclic phosphate + ethanolamine. The enzyme catalyses a 1-acyl-sn-glycero-3-phosphocholine = a 1-acyl-sn-glycero-2,3-cyclic phosphate + choline. It catalyses the reaction a 1-acyl-sn-glycero-3-phosphoethanolamine = a 1-acyl-sn-glycero-2,3-cyclic phosphate + ethanolamine. Functionally, dermonecrotic toxins cleave the phosphodiester linkage between the phosphate and headgroup of certain phospholipids (sphingolipid and lysolipid substrates), forming an alcohol (often choline) and a cyclic phosphate. This toxin acts on sphingomyelin (SM). It may also act on ceramide phosphoethanolamine (CPE), lysophosphatidylcholine (LPC) and lysophosphatidylethanolamine (LPE), but not on lysophosphatidylserine (LPS), and lysophosphatidylglycerol (LPG). It acts by transphosphatidylation, releasing exclusively cyclic phosphate products as second products. Induces dermonecrosis, hemolysis, increased vascular permeability, edema, inflammatory response, and platelet aggregation. This is Dermonecrotic toxin LarSicTox-alphaIB1aiv from Loxosceles arizonica (Arizona brown spider).